The sequence spans 157 residues: 2-C-methyl-D-erythritol 2,4-cyclodiphosphate synthase (157 aa).

Positions 8 and 10 each coordinate a divalent metal cation. Residues 8–10 (DVH) and 34–35 (HS) each bind 4-CDP-2-C-methyl-D-erythritol 2-phosphate. Histidine 42 is a binding site for a divalent metal cation. 4-CDP-2-C-methyl-D-erythritol 2-phosphate-binding positions include 56-58 (DIG), 132-135 (TTNE), and arginine 142.

This sequence belongs to the IspF family. As to quaternary structure, homotrimer. It depends on a divalent metal cation as a cofactor.

It catalyses the reaction 4-CDP-2-C-methyl-D-erythritol 2-phosphate = 2-C-methyl-D-erythritol 2,4-cyclic diphosphate + CMP. It functions in the pathway isoprenoid biosynthesis; isopentenyl diphosphate biosynthesis via DXP pathway; isopentenyl diphosphate from 1-deoxy-D-xylulose 5-phosphate: step 4/6. Functionally, involved in the biosynthesis of isopentenyl diphosphate (IPP) and dimethylallyl diphosphate (DMAPP), two major building blocks of isoprenoid compounds. Catalyzes the conversion of 4-diphosphocytidyl-2-C-methyl-D-erythritol 2-phosphate (CDP-ME2P) to 2-C-methyl-D-erythritol 2,4-cyclodiphosphate (ME-CPP) with a corresponding release of cytidine 5-monophosphate (CMP). The chain is 2-C-methyl-D-erythritol 2,4-cyclodiphosphate synthase from Prosthecochloris aestuarii (strain DSM 271 / SK 413).